A 219-amino-acid chain; its full sequence is MEYLSAFNPNGLLRSVSTVSSELSRRVWNSAPPPQRPFRVCDHKRTVRKGLTAASLQELLDKVLETLLLRGVLTLVLEEDGTAVDSEDFFQLLEDDTCLMVLEQGQSWSPKSGMLSYGLGREKPKHSKDIARITFDVYKQNPRDLFGSLNVKATFYGLYSMSCDFQGVGPKRVLRELLRWTSSLLQGLGHMLLGISSTLRHVVEGADRWQWHGQRHLHS.

Thr-18 is modified (phosphothreonine). Residues 34–110 enclose the CIDE-N domain; sequence PQRPFRVCDH…VLEQGQSWSP (77 aa).

Belongs to the CIDE family. In terms of assembly, interacts with DFFA. Interacts with DFFB; inhibited by DFFB. Interacts with APOB. Interacts with PREB/SEC12; facilitating loading of SCAP-SREBP into COPII vesicles. In terms of tissue distribution, highly enriched in the liver.

It localises to the lipid droplet. It is found in the endoplasmic reticulum membrane. The protein resides in the golgi apparatus. The protein localises to the cytoplasmic vesicle. Its subcellular location is the COPI-coated vesicle. Its function is as follows. Lipid transferase specifically expressed in hepatocytes, which promotes unilocular lipid droplet formation by mediating lipid droplet fusion. Lipid droplet fusion promotes their enlargement, restricting lipolysis and favoring lipid storage. Localizes on the lipid droplet surface, at focal contact sites between lipid droplets, and mediates atypical lipid droplet fusion by promoting directional net neutral lipid transfer from the smaller to larger lipid droplets. The transfer direction may be driven by the internal pressure difference between the contacting lipid droplet pair. Promotes lipid exchange and lipid droplet fusion in both small and large lipid droplet-containing hepatocytes. In addition to its role in lipid droplet fusion, also involved in cytoplasmic vesicle biogenesis and transport. Required for very-low-density lipoprotein (VLDL) lipidation and maturation. Probably involved in the biogenesis of VLDL transport vesicles by forming a COPII vesicle coat and facilitating the formation of endoplasmic reticulum-derived large vesicles. Also involved in sterol-regulated export of the SCAP-SREBP complex, composed of SCAP, SREBF1/SREBP1 and SREBF2/SREBP2, by promoting loading of SCAP-SREBP into COPII vesicles. May also activate apoptosis. The sequence is that of Lipid transferase CIDEB from Mus musculus (Mouse).